The primary structure comprises 226 residues: MYLSRAVSPRNVPVFSTGSFALDVALGVGGLPKGRLVEIYGPEASGKTALALHMLSMLLIRSLAKAIGVNTENLLLSQPDCGKQALSLVDTLIQSGSVDVIVVDSVAALVPKGELDGEMGDAHMAIQARLMSQALRKFSHSLLLSQTLLIFINQVRERFGGPTEVTSGGNALKFYAPMRLDIKRIGLIKKGEEFFRMTKCLCLNACAHNGKSSLREDSEEQARSAI.

41–48 provides a ligand contact to ATP; that stretch reads GPEASGKT.

It belongs to the RecA family.

It localises to the cytoplasm. In terms of biological role, involved in recombination ability and DNA strand transfer activity. This is Putative DNA repair protein recA homolog 4 from Arabidopsis thaliana (Mouse-ear cress).